We begin with the raw amino-acid sequence, 471 residues long: MSANIGKIVQVIGAVVDVEFPSGNLPNILSALDIKNPNNSDAPQLVCEVAQHLGDNVVRTIAMDATEGLVRGMEAVDTGKPIMVPVGKASLGRIMNVVGRPVDEMGPIKTDKYLPIHRPAPEFTEQNTKVELLETGIKVVDLLIPFPKGGKMGLFGGAGVGKTVILMEMINNIAKQHGGISVFAGVGERTREGNDLYHEMKDAGVLEKAALIYGQMNEPPGARARVALTALACAEYFRDIENQDVLLFVDNIFRFTQAGSEVSALLGRMPSAVGYQPTLGTDLGGLQERITSTVKGSITSVQAVYVPADDLTDPAPATTFSHLDGTLVLSRQIAELGIYPAVDPLDSTSRILDPNVVGPEHYSVARAVQQVLQKYKDLQDIIAILGMDELSDEDKLTVARARRIQRFLSQPFHVAETFTGTPGVYVKLEDTIKAFRGILNGDFDHLAEGDFYMVGGIETALEKYKKRQEQQ.

Residue 156–163 (GGAGVGKT) coordinates ATP.

The protein belongs to the ATPase alpha/beta chains family. As to quaternary structure, F-type ATPases have 2 components, CF(1) - the catalytic core - and CF(0) - the membrane proton channel. CF(1) has five subunits: alpha(3), beta(3), gamma(1), delta(1), epsilon(1). CF(0) has three main subunits: a(1), b(2) and c(9-12). The alpha and beta chains form an alternating ring which encloses part of the gamma chain. CF(1) is attached to CF(0) by a central stalk formed by the gamma and epsilon chains, while a peripheral stalk is formed by the delta and b chains.

It localises to the cell inner membrane. It catalyses the reaction ATP + H2O + 4 H(+)(in) = ADP + phosphate + 5 H(+)(out). Produces ATP from ADP in the presence of a proton gradient across the membrane. The catalytic sites are hosted primarily by the beta subunits. This Nitratidesulfovibrio vulgaris (strain DSM 19637 / Miyazaki F) (Desulfovibrio vulgaris) protein is ATP synthase subunit beta.